A 520-amino-acid polypeptide reads, in one-letter code: Cholesterol side-chain cleavage enzyme, mitochondrial (520 aa).

The transit peptide at 1–39 (MLARGLPFRSALVKACPPLLNTGREGWGHHRVGTGEGAG) directs the protein to the mitochondrion. The segment at 27 to 47 (WGHHRVGTGEGAGISTRTPRP) is disordered. C461 is a heme binding site.

It belongs to the cytochrome P450 family. Interacts with FDX1/adrenodoxin. The cofactor is heme.

It is found in the mitochondrion inner membrane. It carries out the reaction 6 reduced [adrenodoxin] + cholesterol + 3 O2 + 6 H(+) = 4-methylpentanal + pregnenolone + 6 oxidized [adrenodoxin] + 4 H2O. It catalyses the reaction 2 reduced [adrenodoxin] + cholesterol + O2 + 2 H(+) = (22R)-hydroxycholesterol + 2 oxidized [adrenodoxin] + H2O. The enzyme catalyses (22R)-hydroxycholesterol + 2 reduced [adrenodoxin] + O2 + 2 H(+) = (20R,22R)-20,22-dihydroxycholesterol + 2 oxidized [adrenodoxin] + H2O. The catalysed reaction is (20R,22R)-20,22-dihydroxycholesterol + 2 reduced [adrenodoxin] + O2 + 2 H(+) = 4-methylpentanal + pregnenolone + 2 oxidized [adrenodoxin] + 2 H2O. The protein operates within lipid metabolism; C21-steroid hormone metabolism. It functions in the pathway steroid metabolism; cholesterol metabolism. A cytochrome P450 monooxygenase that catalyzes the side-chain hydroxylation and cleavage of cholesterol to pregnenolone, the precursor of most steroid hormones. Catalyzes three sequential oxidation reactions of cholesterol, namely the hydroxylation at C22 followed with the hydroxylation at C20 to yield 20R,22R-hydroxycholesterol that is further cleaved between C20 and C22 to yield the C21-steroid pregnenolone and 4-methylpentanal. Mechanistically, uses molecular oxygen inserting one oxygen atom into a substrate and reducing the second into a water molecule. Two electrons are provided by NADPH via a two-protein mitochondrial transfer system comprising flavoprotein FDXR (adrenodoxin/ferredoxin reductase) and nonheme iron-sulfur protein FDX1 or FDX2 (adrenodoxin/ferredoxin). The sequence is that of Cholesterol side-chain cleavage enzyme, mitochondrial from Ovis aries (Sheep).